The primary structure comprises 284 residues: Bifunctional protein FolD (284 aa).

Residues 164-166 (GRS) and Ser189 contribute to the NADP(+) site.

The protein belongs to the tetrahydrofolate dehydrogenase/cyclohydrolase family. Homodimer.

The enzyme catalyses (6R)-5,10-methylene-5,6,7,8-tetrahydrofolate + NADP(+) = (6R)-5,10-methenyltetrahydrofolate + NADPH. It catalyses the reaction (6R)-5,10-methenyltetrahydrofolate + H2O = (6R)-10-formyltetrahydrofolate + H(+). It participates in one-carbon metabolism; tetrahydrofolate interconversion. Catalyzes the oxidation of 5,10-methylenetetrahydrofolate to 5,10-methenyltetrahydrofolate and then the hydrolysis of 5,10-methenyltetrahydrofolate to 10-formyltetrahydrofolate. This Listeria monocytogenes serotype 4a (strain HCC23) protein is Bifunctional protein FolD.